Reading from the N-terminus, the 372-residue chain is Cyclin-A3-2 (372 aa).

Residues 53–73 (NQKKETQKPKRNLKPPPAKQI) form a disordered region.

Belongs to the cyclin family. Cyclin AB subfamily.

The chain is Cyclin-A3-2 (CYCA3-2) from Arabidopsis thaliana (Mouse-ear cress).